The chain runs to 2153 residues: RNA-directed RNA polymerase L (2153 aa).

His36, Glu54, Asp97, Glu110, and Val111 together coordinate Mn(2+). The For endonuclease activity role is filled by Lys124. Residues 957–1143 enclose the RdRp catalytic domain; the sequence is TGKSIKFKRK…AINQEMWKSM (187 aa). Residue Asp1100 coordinates Mg(2+).

The protein belongs to the Bunyavirales RNA polymerase family. As to quaternary structure, interacts with the viral nucleoprotein. The cofactor is Mn(2+). Requires Mg(2+) as cofactor.

Its subcellular location is the host cytoplasm. It is found in the host perinuclear region. The enzyme catalyses RNA(n) + a ribonucleoside 5'-triphosphate = RNA(n+1) + diphosphate. RNA-dependent RNA polymerase, which is responsible for the replication and transcription of the viral RNA genome using antigenomic RNA as an intermediate. During transcription, synthesizes subgenomic RNAs and assures their capping by a cap-snatching mechanism, which involves the endonuclease activity cleaving the host capped pre-mRNAs. These short capped RNAs are then used as primers for viral transcription. Cleaves ssRNA substrates but not DNA. Seems to downregulate the expression of its own and heterologous mRNAs through its endonuclease activity. This is RNA-directed RNA polymerase L from Abrothrix longipilis (Long-haired grass mouse).